The primary structure comprises 443 residues: Glutamyl-tRNA reductase (443 aa).

Substrate contacts are provided by residues 49–52, S109, 114–116, and Q120; these read TCNR and ETQ. C50 (nucleophile) is an active-site residue. 189-194 provides a ligand contact to NADP(+); sequence GAGDMS.

The protein belongs to the glutamyl-tRNA reductase family. Homodimer.

The catalysed reaction is (S)-4-amino-5-oxopentanoate + tRNA(Glu) + NADP(+) = L-glutamyl-tRNA(Glu) + NADPH + H(+). The protein operates within porphyrin-containing compound metabolism; protoporphyrin-IX biosynthesis; 5-aminolevulinate from L-glutamyl-tRNA(Glu): step 1/2. Its function is as follows. Catalyzes the NADPH-dependent reduction of glutamyl-tRNA(Glu) to glutamate 1-semialdehyde (GSA). This Staphylococcus saprophyticus subsp. saprophyticus (strain ATCC 15305 / DSM 20229 / NCIMB 8711 / NCTC 7292 / S-41) protein is Glutamyl-tRNA reductase.